We begin with the raw amino-acid sequence, 272 residues long: NH(3)-dependent NAD(+) synthetase (272 aa).

An ATP-binding site is contributed by 45–52 (GISGGQDS). Aspartate 51 serves as a coordination point for Mg(2+). Residue arginine 138 coordinates deamido-NAD(+). Position 158 (threonine 158) interacts with ATP. Residue glutamate 163 participates in Mg(2+) binding. Deamido-NAD(+) contacts are provided by lysine 171 and aspartate 178. The ATP site is built by lysine 187 and threonine 209. A deamido-NAD(+)-binding site is contributed by 258-259 (HK).

The protein belongs to the NAD synthetase family. In terms of assembly, homodimer.

It catalyses the reaction deamido-NAD(+) + NH4(+) + ATP = AMP + diphosphate + NAD(+) + H(+). It participates in cofactor biosynthesis; NAD(+) biosynthesis; NAD(+) from deamido-NAD(+) (ammonia route): step 1/1. Catalyzes the ATP-dependent amidation of deamido-NAD to form NAD. Uses ammonia as a nitrogen source. The polypeptide is NH(3)-dependent NAD(+) synthetase (Bacillus cereus (strain Q1)).